The chain runs to 670 residues: Lebercilin-like protein (670 aa).

The tract at residues 30–51 (KRSPGTGDFSRNSNASNKSVDY) is disordered. The span at 38–51 (FSRNSNASNKSVDY) shows a compositional bias: polar residues. Coiled-coil stretches lie at residues 148 to 259 (LHKI…EREE) and 305 to 336 (AAQT…IKNI). The segment at 374 to 393 (HQGTQKSDVPPLTTKGKKAT) is disordered. Residues 420 to 440 (EDSKRKYEDLSGEEKHLEVQI) are a coiled coil. Disordered regions lie at residues 495 to 516 (RSMQ…YTKG), 557 to 580 (KHLS…SFGK), and 609 to 670 (LKTD…KIII). Basic and acidic residues-rich tracts occupy residues 560 to 572 (SNRE…HSDS) and 621 to 632 (GSEEPLQSKESH). Residues 651–662 (TVVNSIKPSSPT) show a composition bias toward polar residues.

Belongs to the LCA5 family.

This is Lebercilin-like protein (LCA5L) from Homo sapiens (Human).